Here is an 831-residue protein sequence, read N- to C-terminus: uncharacterized protein (831 aa).

The CID domain occupies 1 to 146; that stretch reads MDIFDSTITS…RAFSILSGVA (146 aa). Disordered stretches follow at residues 205–233, 265–354, 434–480, and 572–831; these read SSSS…SSIS, KEHF…NYNN, IGNS…NEDS, and CGAD…SNRH. Composition is skewed to low complexity over residues 272 to 354 and 434 to 477; these read NDTS…NYNN and IGNS…NNNN. Basic and acidic residues-rich tracts occupy residues 592–601 and 611–813; these read NENKQNDSHR and SRGE…RSKE. A compositionally biased stretch (low complexity) spans 817–831; it reads NNDNRSSSNRSSNRH.

This is an uncharacterized protein from Dictyostelium discoideum (Social amoeba).